Reading from the N-terminus, the 275-residue chain is Large ribosomal subunit protein uL2 (275 aa).

Residues 223-275 (AAMNANDHPHGGGEAKAGQGNPHPVTPWGVPTKGYKTRKNKRTQQFIVRDRRG) form a disordered region.

It belongs to the universal ribosomal protein uL2 family. As to quaternary structure, part of the 50S ribosomal subunit. Forms a bridge to the 30S subunit in the 70S ribosome.

Its function is as follows. One of the primary rRNA binding proteins. Required for association of the 30S and 50S subunits to form the 70S ribosome, for tRNA binding and peptide bond formation. It has been suggested to have peptidyltransferase activity; this is somewhat controversial. Makes several contacts with the 16S rRNA in the 70S ribosome. The sequence is that of Large ribosomal subunit protein uL2 from Xanthomonas campestris pv. campestris (strain 8004).